A 256-amino-acid polypeptide reads, in one-letter code: MYLEQLKEVNPLTICITNNVVKNFTANGLLALGASPAMSECIEDLEDLLKVADALLINIGTLTKESWQLYQEAIKIANKNQVPVVLDPVAAGASRFRLEVSLDLLKNYSISLLRGNGSEIAALIGEKQASKGADGGKVADLESIAVKANQVFDVPVVVTGETDAIAVRGEVRLLQNGSPLMPLVTGTGCLLGAVLAAFIGSSDRSDDLACLTEAMTVYNVAGEIAEKVAKGKGVGSFQVAFLDALSQMKSEMIMDK.

M38 contacts substrate. Residues R114 and T159 each contribute to the ATP site. G186 serves as a coordination point for substrate.

This sequence belongs to the Thz kinase family. Requires Mg(2+) as cofactor.

The catalysed reaction is 5-(2-hydroxyethyl)-4-methylthiazole + ATP = 4-methyl-5-(2-phosphooxyethyl)-thiazole + ADP + H(+). Its pathway is cofactor biosynthesis; thiamine diphosphate biosynthesis; 4-methyl-5-(2-phosphoethyl)-thiazole from 5-(2-hydroxyethyl)-4-methylthiazole: step 1/1. Functionally, catalyzes the phosphorylation of the hydroxyl group of 4-methyl-5-beta-hydroxyethylthiazole (THZ). This is Hydroxyethylthiazole kinase from Streptococcus agalactiae serotype Ia (strain ATCC 27591 / A909 / CDC SS700).